We begin with the raw amino-acid sequence, 366 residues long: tRNA/tmRNA (uracil-C(5))-methyltransferase (366 aa).

Residues glutamine 188, tyrosine 216, asparagine 221, glutamate 237, and aspartate 297 each coordinate S-adenosyl-L-methionine. Cysteine 322 functions as the Nucleophile in the catalytic mechanism. Glutamate 356 serves as the catalytic Proton acceptor.

This sequence belongs to the class I-like SAM-binding methyltransferase superfamily. RNA M5U methyltransferase family. TrmA subfamily.

It catalyses the reaction uridine(54) in tRNA + S-adenosyl-L-methionine = 5-methyluridine(54) in tRNA + S-adenosyl-L-homocysteine + H(+). The catalysed reaction is uridine(341) in tmRNA + S-adenosyl-L-methionine = 5-methyluridine(341) in tmRNA + S-adenosyl-L-homocysteine + H(+). Its function is as follows. Dual-specificity methyltransferase that catalyzes the formation of 5-methyluridine at position 54 (m5U54) in all tRNAs, and that of position 341 (m5U341) in tmRNA (transfer-mRNA). This chain is tRNA/tmRNA (uracil-C(5))-methyltransferase, found in Histophilus somni (strain 129Pt) (Haemophilus somnus).